The following is a 490-amino-acid chain: ATP synthase subunit beta, plastid (490 aa).

170 to 177 (GGAGVGKT) contributes to the ATP binding site.

It belongs to the ATPase alpha/beta chains family. F-type ATPases have 2 components, CF(1) - the catalytic core - and CF(0) - the membrane proton channel. CF(1) has five subunits: alpha(3), beta(3), gamma(1), delta(1), epsilon(1). CF(0) has four main subunits: a(1), b(1), b'(1) and c(9-12).

The protein resides in the plastid thylakoid membrane. It catalyses the reaction ATP + H2O + 4 H(+)(in) = ADP + phosphate + 5 H(+)(out). Its function is as follows. Produces ATP from ADP in the presence of a proton gradient across the membrane. The catalytic sites are hosted primarily by the beta subunits. This chain is ATP synthase subunit beta, plastid, found in Cuscuta reflexa (Southern Asian dodder).